We begin with the raw amino-acid sequence, 91 residues long: Small ribosomal subunit protein uS19 (91 aa).

This sequence belongs to the universal ribosomal protein uS19 family.

Functionally, protein S19 forms a complex with S13 that binds strongly to the 16S ribosomal RNA. In Trichodesmium erythraeum (strain IMS101), this protein is Small ribosomal subunit protein uS19.